We begin with the raw amino-acid sequence, 276 residues long: Dermonecrotic toxin LvSicTox-alphaII1 (276 aa).

Histidine 5 is an active-site residue. 2 residues coordinate Mg(2+): glutamate 25 and aspartate 27. Histidine 41 (nucleophile) is an active-site residue. 2 disulfide bridges follow: cysteine 45-cysteine 51 and cysteine 47-cysteine 193. Aspartate 85 contacts Mg(2+).

It belongs to the arthropod phospholipase D family. Class II subfamily. The cofactor is Mg(2+). In terms of tissue distribution, expressed by the venom gland.

The protein resides in the secreted. The catalysed reaction is an N-(acyl)-sphingosylphosphocholine = an N-(acyl)-sphingosyl-1,3-cyclic phosphate + choline. It carries out the reaction an N-(acyl)-sphingosylphosphoethanolamine = an N-(acyl)-sphingosyl-1,3-cyclic phosphate + ethanolamine. The enzyme catalyses a 1-acyl-sn-glycero-3-phosphocholine = a 1-acyl-sn-glycero-2,3-cyclic phosphate + choline. It catalyses the reaction a 1-acyl-sn-glycero-3-phosphoethanolamine = a 1-acyl-sn-glycero-2,3-cyclic phosphate + ethanolamine. Functionally, dermonecrotic toxins cleave the phosphodiester linkage between the phosphate and headgroup of certain phospholipids (sphingolipid and lysolipid substrates), forming an alcohol (often choline) and a cyclic phosphate. This toxin acts on sphingomyelin (SM). It may also act on ceramide phosphoethanolamine (CPE), lysophosphatidylcholine (LPC) and lysophosphatidylethanolamine (LPE), but not on lysophosphatidylserine (LPS), and lysophosphatidylglycerol (LPG). It acts by transphosphatidylation, releasing exclusively cyclic phosphate products as second products. Induces dermonecrosis, hemolysis, increased vascular permeability, edema, inflammatory response, and platelet aggregation. In Loxosceles variegata (Recluse spider), this protein is Dermonecrotic toxin LvSicTox-alphaII1.